The primary structure comprises 502 residues: UDP-N-acetylmuramate--L-alanine ligase (502 aa).

120–126 (GTHGKTS) contacts ATP.

The protein belongs to the MurCDEF family.

It is found in the cytoplasm. It carries out the reaction UDP-N-acetyl-alpha-D-muramate + L-alanine + ATP = UDP-N-acetyl-alpha-D-muramoyl-L-alanine + ADP + phosphate + H(+). Its pathway is cell wall biogenesis; peptidoglycan biosynthesis. Its function is as follows. Cell wall formation. This is UDP-N-acetylmuramate--L-alanine ligase from Rhodococcus erythropolis (strain PR4 / NBRC 100887).